Reading from the N-terminus, the 488-residue chain is Probable 26S proteasome non-ATPase regulatory subunit 3 (488 aa).

The disordered stretch occupies residues 1 to 20 (MTQDVEMKEQAAPPSNSLSS). Residues 240–421 (SRYLFYLGKI…GWMVSKETGD (182 aa)) enclose the PCI domain. Positions 452–488 (FPPNSHKEKESAEKRRERQQQEQELAKHIAEEDDDDF) are disordered. Over residues 456–481 (SHKEKESAEKRRERQQQEQELAKHIA) the composition is skewed to basic and acidic residues.

Belongs to the proteasome subunit S3 family. As to quaternary structure, the 26S proteasome is composed of a core protease, known as the 20S proteasome, capped at one or both ends by the 19S regulatory complex (RC). The RC is composed of at least 18 different subunits in two subcomplexes, the base and the lid, which form the portions proximal and distal to the 20S proteolytic core, respectively.

The protein localises to the nucleus. Functionally, acts as a regulatory subunit of the 26 proteasome which is involved in the ATP-dependent degradation of ubiquitinated proteins. In Nicotiana tabacum (Common tobacco), this protein is Probable 26S proteasome non-ATPase regulatory subunit 3 (21D7).